The following is a 176-amino-acid chain: Transcription termination/antitermination protein NusG (176 aa).

One can recognise a KOW domain in the interval 125–149 (GEVVRVVEGPFANFTATVEEYDVEH).

Belongs to the NusG family.

Functionally, participates in transcription elongation, termination and antitermination. The protein is Transcription termination/antitermination protein NusG of Helicobacter pylori (strain J99 / ATCC 700824) (Campylobacter pylori J99).